A 438-amino-acid chain; its full sequence is Aspartate--tRNA(Asp/Asn) ligase (438 aa).

Residue E176 participates in L-aspartate binding. Positions Q198–K201 are aspartate. Position 220 (R220) interacts with L-aspartate. Residues R220–E222, R228–L230, and E361 contribute to the ATP site. Positions 361 and 364 each coordinate Mg(2+). L-aspartate is bound by residues S364 and R368. G409–R412 is an ATP binding site.

The protein belongs to the class-II aminoacyl-tRNA synthetase family. Type 2 subfamily. As to quaternary structure, homodimer. It depends on Mg(2+) as a cofactor.

It localises to the cytoplasm. The catalysed reaction is tRNA(Asx) + L-aspartate + ATP = L-aspartyl-tRNA(Asx) + AMP + diphosphate. In terms of biological role, aspartyl-tRNA synthetase with relaxed tRNA specificity since it is able to aspartylate not only its cognate tRNA(Asp) but also tRNA(Asn). Reaction proceeds in two steps: L-aspartate is first activated by ATP to form Asp-AMP and then transferred to the acceptor end of tRNA(Asp/Asn). In Methanocaldococcus jannaschii (strain ATCC 43067 / DSM 2661 / JAL-1 / JCM 10045 / NBRC 100440) (Methanococcus jannaschii), this protein is Aspartate--tRNA(Asp/Asn) ligase.